The following is a 727-amino-acid chain: Catalase-peroxidase (727 aa).

The segment at 1–24 (MDQKSDSAGKCPVAHTAPRGRSNR) is disordered. The segment at residues 95–217 (WHSAGTYRIT…LAAVQMGLIY (123 aa)) is a cross-link (tryptophyl-tyrosyl-methioninium (Trp-Tyr) (with M-243)). Catalysis depends on His-96, which acts as the Proton acceptor. The tryptophyl-tyrosyl-methioninium (Tyr-Met) (with W-95) cross-link spans 217–243 (YVNPEGPNGNPDPVAAARDIRETFARM). His-258 is a heme b binding site.

This sequence belongs to the peroxidase family. Peroxidase/catalase subfamily. As to quaternary structure, homodimer or homotetramer. Heme b is required as a cofactor. Formation of the three residue Trp-Tyr-Met cross-link is important for the catalase, but not the peroxidase activity of the enzyme.

It catalyses the reaction H2O2 + AH2 = A + 2 H2O. The enzyme catalyses 2 H2O2 = O2 + 2 H2O. Bifunctional enzyme with both catalase and broad-spectrum peroxidase activity. This is Catalase-peroxidase from Rhizobium meliloti (strain 1021) (Ensifer meliloti).